The sequence spans 67 residues: LPS-assembly lipoprotein LptM (67 aa).

The signal sequence occupies residues 1–19; the sequence is MKNVFKALTVLLTLFSLTG. Residue cysteine 20 is the site of N-palmitoyl cysteine attachment. Cysteine 20 carries the S-diacylglycerol cysteine lipid modification. Positions 26–67 are disordered; that stretch reads LYFPPADKNAPPPTKPVETQTQSTVPDKNDRATGDGPSQVNY. Polar residues predominate over residues 42–51; the sequence is VETQTQSTVP.

The protein belongs to the LptM family. As to quaternary structure, interacts with the outer membrane embedded portion of the LPS translocon formed by LptD and LptE (LptDE).

It is found in the cell outer membrane. Its function is as follows. Component of the lipopolysaccharide (LPS) transport (Lpt) pathway that promotes efficient assembly of the outer membrane LPS translocon (LptDE) by the BAM complex. Facilitates oxidative maturation of LptD by stabilizing a conformation of the LPS translocon in which LptD can efficiently acquire native disulfide bonds, thereby activating the LPS translocon. This chain is LPS-assembly lipoprotein LptM, found in Escherichia coli O157:H7.